The chain runs to 174 residues: Granulocyte colony-stimulating factor (174 aa).

2 cysteine pairs are disulfide-bonded: cysteine 36–cysteine 42 and cysteine 64–cysteine 74. O-linked (GalNAc...) threonine glycosylation occurs at threonine 133.

It belongs to the IL-6 superfamily. In terms of assembly, monomer. Post-translationally, O-glycosylated.

The protein resides in the secreted. In terms of biological role, granulocyte/macrophage colony-stimulating factors are cytokines that act in hematopoiesis by controlling the production, differentiation, and function of 2 related white cell populations of the blood, the granulocytes and the monocytes-macrophages. This CSF induces granulocytes. In Ovis aries (Sheep), this protein is Granulocyte colony-stimulating factor (CSF3).